Reading from the N-terminus, the 89-residue chain is Large ribosomal subunit protein bL27 (89 aa).

The interval 1 to 20 (MAHKKAGGSSRNGRDSAGQR) is disordered.

This sequence belongs to the bacterial ribosomal protein bL27 family.

This chain is Large ribosomal subunit protein bL27, found in Paramagnetospirillum magneticum (strain ATCC 700264 / AMB-1) (Magnetospirillum magneticum).